The sequence spans 501 residues: Cytochrome P450 90A3 (501 aa).

A helical membrane pass occupies residues 2–22 (AAAALLLLAAAAAIVVVAMVL). C446 contributes to the heme binding site.

Belongs to the cytochrome P450 family. Requires heme as cofactor. Highly expressed in shoot apex and inflorenscence. Expressed in roots, stems, leaf blades and leaf sheaths.

Its subcellular location is the membrane. It functions in the pathway plant hormone biosynthesis; brassinosteroid biosynthesis. Catalyzes the C23-alpha-hydroxylation step in brassinosteroid biosynthesis. Converts 6-deoxocathasterone (6-deoxoCT) to 6-deoxoteasterone (6-deoxoTE) in the late C6-oxidation pathway and cathasterone (CT) to teasterone (TE) in the early C6-oxidation pathway of brassinolide (BL) biosynthesis. The chain is Cytochrome P450 90A3 from Oryza sativa subsp. japonica (Rice).